The primary structure comprises 156 residues: ATP synthase subunit b (156 aa).

The helical transmembrane segment at 7-27 threads the bilayer; it reads LFAQLVVFFILAWFTMKFVWP.

The protein belongs to the ATPase B chain family. In terms of assembly, F-type ATPases have 2 components, F(1) - the catalytic core - and F(0) - the membrane proton channel. F(1) has five subunits: alpha(3), beta(3), gamma(1), delta(1), epsilon(1). F(0) has four main subunits: a(1), b(2) and c(10-14). The alpha and beta chains form an alternating ring which encloses part of the gamma chain. F(1) is attached to F(0) by a central stalk formed by the gamma and epsilon chains, while a peripheral stalk is formed by the delta and b chains.

It localises to the cell inner membrane. Its function is as follows. F(1)F(0) ATP synthase produces ATP from ADP in the presence of a proton or sodium gradient. F-type ATPases consist of two structural domains, F(1) containing the extramembraneous catalytic core and F(0) containing the membrane proton channel, linked together by a central stalk and a peripheral stalk. During catalysis, ATP synthesis in the catalytic domain of F(1) is coupled via a rotary mechanism of the central stalk subunits to proton translocation. Component of the F(0) channel, it forms part of the peripheral stalk, linking F(1) to F(0). The protein is ATP synthase subunit b of Methylibium petroleiphilum (strain ATCC BAA-1232 / LMG 22953 / PM1).